The sequence spans 421 residues: Forkhead box protein fkh-3 (421 aa).

Residues 118-218 constitute a DNA-binding region (fork-head); that stretch reads RPPISYVALC…SDADFDFFRK (101 aa).

The protein localises to the nucleus. In terms of biological role, transcription factor. Binds to DNA sequence motif 5'-CTGTTTCA-3'. Regulates expression of a class of small RNAs, known as 21U-RNAs, perhaps acting redundantly with fkh-4 and fkh-5. The polypeptide is Forkhead box protein fkh-3 (Caenorhabditis elegans).